We begin with the raw amino-acid sequence, 284 residues long: ATP synthase gamma chain (284 aa).

This sequence belongs to the ATPase gamma chain family. As to quaternary structure, F-type ATPases have 2 components, CF(1) - the catalytic core - and CF(0) - the membrane proton channel. CF(1) has five subunits: alpha(3), beta(3), gamma(1), delta(1), epsilon(1). CF(0) has three main subunits: a, b and c.

It localises to the cell membrane. Functionally, produces ATP from ADP in the presence of a proton gradient across the membrane. The gamma chain is believed to be important in regulating ATPase activity and the flow of protons through the CF(0) complex. The polypeptide is ATP synthase gamma chain (Bacillus licheniformis (strain ATCC 14580 / DSM 13 / JCM 2505 / CCUG 7422 / NBRC 12200 / NCIMB 9375 / NCTC 10341 / NRRL NRS-1264 / Gibson 46)).